We begin with the raw amino-acid sequence, 503 residues long: Transcription termination/antitermination protein NusA (503 aa).

Positions 140–206 (GELVIGVVKR…RGPQLLVSRT (67 aa)) constitute an S1 motif domain. In terms of domain architecture, KH spans 308 to 374 (SHTMDIAVNK…FMEKLDVDEE (67 aa)).

This sequence belongs to the NusA family. Monomer. Binds directly to the core enzyme of the DNA-dependent RNA polymerase and to nascent RNA.

The protein resides in the cytoplasm. Participates in both transcription termination and antitermination. The sequence is that of Transcription termination/antitermination protein NusA from Coxiella burnetii (strain RSA 493 / Nine Mile phase I).